A 230-amino-acid chain; its full sequence is MMHIPNRSIQAANIFFSSGAILLLIVGLIMEDWVELIPKVRKDKTTHSPWLGCCPPFWPEESLEVVRRIMRMTLNISIYLNLIIGLQFSYMISQNKCVHLLVGFLSFFAGCLLFYAIIVYHHKLNKGQYVYFVNYKTKWIAFTVYLTIALFLTCGIFCFIQSTNRCECMKFCIPHTESKSQEMIPSTIEVVSLPPRCAMPRSIVHVHSVTSKDGSLNRPHTQARRVTWAL.

Residues 1-8 (MMHIPNRS) lie on the Cytoplasmic side of the membrane. The chain crosses the membrane as a helical span at residues 9-29 (IQAANIFFSSGAILLLIVGLI). Residues 30–71 (MEDWVELIPKVRKDKTTHSPWLGCCPPFWPEESLEVVRRIMR) are Extracellular-facing. Residues 72–92 (MTLNISIYLNLIIGLQFSYMI) form a helical membrane-spanning segment. Residues 93–99 (SQNKCVH) are Cytoplasmic-facing. A helical transmembrane segment spans residues 100–120 (LLVGFLSFFAGCLLFYAIIVY). Residues 121–139 (HHKLNKGQYVYFVNYKTKW) lie on the Extracellular side of the membrane. Residues 140 to 160 (IAFTVYLTIALFLTCGIFCFI) traverse the membrane as a helical segment. At 161–230 (QSTNRCECMK…TQARRVTWAL (70 aa)) the chain is on the cytoplasmic side. The short motif at 224–228 (RRVTW) is the RVxF element.

Interacts (via RVxF motif) with PPP1CC. Expressed in testis, epididymis and spermatozoa (at protein level). Not expressed in brain, heart, lung, liver, spleen, kidney and skeletal muscle.

The protein localises to the cytoplasmic vesicle. It localises to the secretory vesicle. The protein resides in the acrosome membrane. Probably inhibits protein phosphatase 1 (PP1) in sperm via binding to catalytic subunit PPP1CC. This is Transmembrane protein 225 (Tmem225) from Mus musculus (Mouse).